The chain runs to 1057 residues: Outer capsid protein VP2 (1057 aa).

This sequence belongs to the orbivirus VP2 family.

It is found in the virion. In terms of biological role, the VP2 protein is one of the two proteins (with VP5) which constitute the virus particle outer capsid. It is the major target of the host immunogenic response. The sequence is that of Outer capsid protein VP2 (Segment-2) from Anas (ducks).